We begin with the raw amino-acid sequence, 364 residues long: Aminomethyltransferase (364 aa).

Belongs to the GcvT family. As to quaternary structure, the glycine cleavage system is composed of four proteins: P, T, L and H.

The enzyme catalyses N(6)-[(R)-S(8)-aminomethyldihydrolipoyl]-L-lysyl-[protein] + (6S)-5,6,7,8-tetrahydrofolate = N(6)-[(R)-dihydrolipoyl]-L-lysyl-[protein] + (6R)-5,10-methylene-5,6,7,8-tetrahydrofolate + NH4(+). In terms of biological role, the glycine cleavage system catalyzes the degradation of glycine. In Escherichia coli O17:K52:H18 (strain UMN026 / ExPEC), this protein is Aminomethyltransferase.